The sequence spans 266 residues: Uridylate kinase (266 aa).

Lys-26–Gly-29 contributes to the ATP binding site. Gly-67 contributes to the UMP binding site. 2 residues coordinate ATP: Gly-68 and Arg-72. Residues Asp-87 and Leu-148 to Thr-155 each bind UMP. Positions 181 and 184 each coordinate ATP.

The protein belongs to the UMP kinase family. In terms of assembly, homohexamer.

It localises to the cytoplasm. The enzyme catalyses UMP + ATP = UDP + ADP. The protein operates within pyrimidine metabolism; CTP biosynthesis via de novo pathway; UDP from UMP (UMPK route): step 1/1. With respect to regulation, inhibited by UTP. In terms of biological role, catalyzes the reversible phosphorylation of UMP to UDP. The sequence is that of Uridylate kinase from Acidothermus cellulolyticus (strain ATCC 43068 / DSM 8971 / 11B).